Consider the following 293-residue polypeptide: Phycoerythrin class 2 subunit gamma, linker polypeptide (293 aa).

A phycourobilin-binding site is contributed by Cys-49. The PBS-linker domain occupies 50–229 (AAMGIGIGPR…LGGMKVAISD (180 aa)).

Post-translationally, contains one covalently linked phycourobilin chromophore.

Its subcellular location is the cellular thylakoid membrane. Its function is as follows. This protein is a bile pigment-bearing rod linker polypeptide that associates with C-phycoerythrin. The polypeptide is Phycoerythrin class 2 subunit gamma, linker polypeptide (mpeC) (Synechococcus sp. (strain WH8020)).